Reading from the N-terminus, the 226-residue chain is MLLHIPALFTADEVSRIRAALEQAEWADGKATAGYQSAKAKHNLQLPQDHPLAREIGEAMLQRLWNHPLFMSAALPLKVFPPLFNCYTGGGSFDFHIDNAVRDIQGGRERVRTDLSSTLFFSDPQDYDGGELVIQDTYGLHQVKLPAGDLVLYPGTSLHKVNPVTRGARYASFFWTQSLVREDSQRTLLFEMDQSIQQLTRDVPEHPSLIRLTGTYHNLLRRWSEL.

The Fe2OG dioxygenase domain occupies 78–178 (KVFPPLFNCY…RYASFFWTQS (101 aa)). Fe cation-binding residues include histidine 96, aspartate 98, and histidine 159. A 2-oxoglutarate-binding site is contributed by arginine 169.

The cofactor is Fe(2+). L-ascorbate is required as a cofactor.

The protein is PKHD-type hydroxylase PSPA7_5129 of Pseudomonas paraeruginosa (strain DSM 24068 / PA7) (Pseudomonas aeruginosa (strain PA7)).